The sequence spans 77 residues: ATP synthase subunit c (77 aa).

Helical transmembrane passes span 13-33 and 55-75; these read IATV…GIVA and FLGI…YFIF.

The protein belongs to the ATPase C chain family. As to quaternary structure, F-type ATPases have 2 components, F(1) - the catalytic core - and F(0) - the membrane proton channel. F(1) has five subunits: alpha(3), beta(3), gamma(1), delta(1), epsilon(1). F(0) has three main subunits: a(1), b(2) and c(10-14). The alpha and beta chains form an alternating ring which encloses part of the gamma chain. F(1) is attached to F(0) by a central stalk formed by the gamma and epsilon chains, while a peripheral stalk is formed by the delta and b chains.

The protein localises to the cell membrane. F(1)F(0) ATP synthase produces ATP from ADP in the presence of a proton or sodium gradient. F-type ATPases consist of two structural domains, F(1) containing the extramembraneous catalytic core and F(0) containing the membrane proton channel, linked together by a central stalk and a peripheral stalk. During catalysis, ATP synthesis in the catalytic domain of F(1) is coupled via a rotary mechanism of the central stalk subunits to proton translocation. Functionally, key component of the F(0) channel; it plays a direct role in translocation across the membrane. A homomeric c-ring of between 10-14 subunits forms the central stalk rotor element with the F(1) delta and epsilon subunits. The chain is ATP synthase subunit c from Clavibacter michiganensis subsp. michiganensis (strain NCPPB 382).